Here is a 93-residue protein sequence, read N- to C-terminus: Acylphosphatase (93 aa).

Positions 5-91 (RAHFLVKGFV…RGETTFRIRS (87 aa)) constitute an Acylphosphatase-like domain. Residues Arg-20 and Asn-38 contribute to the active site.

Belongs to the acylphosphatase family.

The catalysed reaction is an acyl phosphate + H2O = a carboxylate + phosphate + H(+). This Moorella thermoacetica (strain ATCC 39073 / JCM 9320) protein is Acylphosphatase (acyP).